A 219-amino-acid chain; its full sequence is Protein DMP5 (219 aa).

The disordered stretch occupies residues 1 to 24; it reads MSALRLRNANTPAPELDELSDQTP. The next 4 helical transmembrane spans lie at 51–71, 82–102, 142–162, and 182–202; these read LSNLLPTGTLLAFQLLTPVFT, FLTAVLLFLLAASCFVSSFTD, MRFVDWIHATLSVLVFGAVAL, and VLDIVPVGVGVMCSLLFMVFP.

This sequence belongs to the plant DMP1 protein family.

It is found in the endoplasmic reticulum membrane. Functionally, involved in membrane remodeling. In Arabidopsis thaliana (Mouse-ear cress), this protein is Protein DMP5.